We begin with the raw amino-acid sequence, 554 residues long: Dihydroxy-acid dehydratase (554 aa).

Mg(2+) is bound at residue Asp78. Cys119 serves as a coordination point for [2Fe-2S] cluster. Residues Asp120 and Lys121 each contribute to the Mg(2+) site. Residue Lys121 is modified to N6-carboxylysine. [2Fe-2S] cluster is bound at residue Cys192. Glu443 serves as a coordination point for Mg(2+). Ser469 acts as the Proton acceptor in catalysis.

The protein belongs to the IlvD/Edd family. Homodimer. [2Fe-2S] cluster serves as cofactor. The cofactor is Mg(2+).

It catalyses the reaction (2R)-2,3-dihydroxy-3-methylbutanoate = 3-methyl-2-oxobutanoate + H2O. The enzyme catalyses (2R,3R)-2,3-dihydroxy-3-methylpentanoate = (S)-3-methyl-2-oxopentanoate + H2O. Its pathway is amino-acid biosynthesis; L-isoleucine biosynthesis; L-isoleucine from 2-oxobutanoate: step 3/4. It functions in the pathway amino-acid biosynthesis; L-valine biosynthesis; L-valine from pyruvate: step 3/4. Functionally, functions in the biosynthesis of branched-chain amino acids. Catalyzes the dehydration of (2R,3R)-2,3-dihydroxy-3-methylpentanoate (2,3-dihydroxy-3-methylvalerate) into 2-oxo-3-methylpentanoate (2-oxo-3-methylvalerate) and of (2R)-2,3-dihydroxy-3-methylbutanoate (2,3-dihydroxyisovalerate) into 2-oxo-3-methylbutanoate (2-oxoisovalerate), the penultimate precursor to L-isoleucine and L-valine, respectively. This Shouchella clausii (strain KSM-K16) (Alkalihalobacillus clausii) protein is Dihydroxy-acid dehydratase.